The primary structure comprises 271 residues: N-acylmannosamine 1-dehydrogenase (271 aa).

Residue 20–44 (VTGAAGGIGRATVEAYLREGASVVA) participates in NAD(+) binding. Residue Ser-153 coordinates substrate. Residue Tyr-166 is the Proton acceptor of the active site.

It belongs to the short-chain dehydrogenases/reductases (SDR) family.

The enzyme catalyses an N-acyl-D-mannosamine + NAD(+) = an N-acyl-D-mannosaminolactone + NADH + H(+). Acts on acetyl-D-mannosamine and glycolyl-D-mannosamine. The polypeptide is N-acylmannosamine 1-dehydrogenase (Flavobacterium sp. (strain 141-8)).